The sequence spans 389 residues: Phospho-N-acetylmuramoyl-pentapeptide-transferase (389 aa).

10 consecutive transmembrane segments (helical) span residues 21 to 41 (FITF…LFFG), 70 to 90 (GTPT…TLLW), 97 to 117 (FVWV…VDDY), 134 to 154 (YMWQ…SVSA), 189 to 209 (TISY…VIVG), 222 to 242 (GLAI…AYLT), 259 to 279 (AGEL…FLWF), 286 to 306 (VFMG…IAVI), 311 to 331 (IVLF…MIQV), and 366 to 386 (QVVV…LSTL).

It belongs to the glycosyltransferase 4 family. MraY subfamily. It depends on Mg(2+) as a cofactor.

It localises to the cell inner membrane. The catalysed reaction is UDP-N-acetyl-alpha-D-muramoyl-L-alanyl-gamma-D-glutamyl-meso-2,6-diaminopimeloyl-D-alanyl-D-alanine + di-trans,octa-cis-undecaprenyl phosphate = di-trans,octa-cis-undecaprenyl diphospho-N-acetyl-alpha-D-muramoyl-L-alanyl-D-glutamyl-meso-2,6-diaminopimeloyl-D-alanyl-D-alanine + UMP. It participates in cell wall biogenesis; peptidoglycan biosynthesis. Catalyzes the initial step of the lipid cycle reactions in the biosynthesis of the cell wall peptidoglycan: transfers peptidoglycan precursor phospho-MurNAc-pentapeptide from UDP-MurNAc-pentapeptide onto the lipid carrier undecaprenyl phosphate, yielding undecaprenyl-pyrophosphoryl-MurNAc-pentapeptide, known as lipid I. This Herminiimonas arsenicoxydans protein is Phospho-N-acetylmuramoyl-pentapeptide-transferase.